The primary structure comprises 163 residues: uncharacterized protein (163 aa).

Over methionine 1–threonine 33 the chain is Cytoplasmic. Residues cysteine 34–phenylalanine 54 form a helical membrane-spanning segment. The Extracellular segment spans residues glutamate 55–aspartate 117. The chain crosses the membrane as a helical span at residues valine 118–phenylalanine 138. The Cytoplasmic segment spans residues glutamate 139–leucine 163.

Its subcellular location is the membrane. This is an uncharacterized protein from Saccharomyces cerevisiae (strain ATCC 204508 / S288c) (Baker's yeast).